The following is a 554-amino-acid chain: 2-succinyl-5-enolpyruvyl-6-hydroxy-3-cyclohexene-1-carboxylate synthase (554 aa).

Belongs to the TPP enzyme family. MenD subfamily. In terms of assembly, homodimer. The cofactor is Mg(2+). It depends on Mn(2+) as a cofactor. Thiamine diphosphate is required as a cofactor.

It catalyses the reaction isochorismate + 2-oxoglutarate + H(+) = 5-enolpyruvoyl-6-hydroxy-2-succinyl-cyclohex-3-ene-1-carboxylate + CO2. It functions in the pathway quinol/quinone metabolism; 1,4-dihydroxy-2-naphthoate biosynthesis; 1,4-dihydroxy-2-naphthoate from chorismate: step 2/7. Its pathway is quinol/quinone metabolism; menaquinone biosynthesis. Functionally, catalyzes the thiamine diphosphate-dependent decarboxylation of 2-oxoglutarate and the subsequent addition of the resulting succinic semialdehyde-thiamine pyrophosphate anion to isochorismate to yield 2-succinyl-5-enolpyruvyl-6-hydroxy-3-cyclohexene-1-carboxylate (SEPHCHC). The protein is 2-succinyl-5-enolpyruvyl-6-hydroxy-3-cyclohexene-1-carboxylate synthase of Renibacterium salmoninarum (strain ATCC 33209 / DSM 20767 / JCM 11484 / NBRC 15589 / NCIMB 2235).